Here is a 96-residue protein sequence, read N- to C-terminus: Cysteine proteinase (96 aa).

Cys-25 and Cys-79 are disulfide-bonded. Residues His-31 and Asn-58 contribute to the active site.

This sequence belongs to the peptidase C1 family.

This is Cysteine proteinase from Carica papaya (Papaya).